A 261-amino-acid chain; its full sequence is MTTSLYWQTEGEGSDLVLIHGWGMNGAVWQPIVEKLSSQYRVHTVDLSGYGYSAELGSADFDEMVAQVLAQAPEKSAWLGWSLGGLIATQAALTAPDRVSQLITVASSPRFAAEKGWRGIKSAVLSQFTEQLKEDFTLTVERFMTLQAMGSPNAKQDIKQVKRAVLSRPAPNPSALATGLTILADIDLRESLSQLTMPVCRMYGRLDGLVPIKVAHDMDAFIPHSTKVVFEQASHAPFISHSDEFITELHRFLQPEDEFLI.

Residues 16–241 form the AB hydrolase-1 domain; sequence LVLIHGWGMN…QASHAPFISH (226 aa). Substrate contacts are provided by residues W22, 82–83, and 143–147; these read SL and FMTLQ. S82 acts as the Nucleophile in catalysis. Catalysis depends on residues D207 and H235. Position 235 (H235) interacts with substrate.

The protein belongs to the AB hydrolase superfamily. Carboxylesterase BioH family. Monomer.

Its subcellular location is the cytoplasm. The catalysed reaction is 6-carboxyhexanoyl-[ACP] methyl ester + H2O = 6-carboxyhexanoyl-[ACP] + methanol + H(+). The protein operates within cofactor biosynthesis; biotin biosynthesis. Functionally, the physiological role of BioH is to remove the methyl group introduced by BioC when the pimeloyl moiety is complete. It allows to synthesize pimeloyl-ACP via the fatty acid synthetic pathway through the hydrolysis of the ester bonds of pimeloyl-ACP esters. This is Pimeloyl-[acyl-carrier protein] methyl ester esterase from Aliivibrio salmonicida (strain LFI1238) (Vibrio salmonicida (strain LFI1238)).